The chain runs to 212 residues: Ribonuclease HII (212 aa).

Positions 22–212 (ILIAGLDEAG…APLKGMIDGL (191 aa)) constitute an RNase H type-2 domain. A divalent metal cation contacts are provided by D28, E29, and D123.

This sequence belongs to the RNase HII family. It depends on Mn(2+) as a cofactor. The cofactor is Mg(2+).

The protein resides in the cytoplasm. The catalysed reaction is Endonucleolytic cleavage to 5'-phosphomonoester.. In terms of biological role, endonuclease that specifically degrades the RNA of RNA-DNA hybrids. The sequence is that of Ribonuclease HII from Dehalococcoides mccartyi (strain ATCC BAA-2100 / JCM 16839 / KCTC 5957 / BAV1).